The chain runs to 291 residues: Taste receptor type 2 member 16 (291 aa).

Met-1 is a topological domain (extracellular). Residues Ile-2–Ile-22 form a helical membrane-spanning segment. The Cytoplasmic portion of the chain corresponds to Val-23–Arg-41. The helical transmembrane segment at Leu-42–Ala-62 threads the bilayer. Topologically, residues Ser-63 to Thr-84 are extracellular. Asn-80 carries an N-linked (GlcNAc...) asparagine glycan. A helical membrane pass occupies residues Trp-85–Ile-105. Residues Lys-106–Leu-125 are Cytoplasmic-facing. Residues Phe-126 to Ile-146 traverse the membrane as a helical segment. Residues Gly-147–Thr-182 lie on the Extracellular side of the membrane. N-linked (GlcNAc...) asparagine glycosylation is present at Asn-163. The chain crosses the membrane as a helical span at residues Val-183–Leu-203. Residues Thr-204–Ser-228 are Cytoplasmic-facing. A helical transmembrane segment spans residues Leu-229 to Gly-249. Residues Thr-250 to Trp-257 lie on the Extracellular side of the membrane. The chain crosses the membrane as a helical span at residues Leu-258–Leu-278. The Cytoplasmic portion of the chain corresponds to Ser-279–Cys-291.

Belongs to the G-protein coupled receptor T2R family. As to quaternary structure, interacts with RTP3 and RTP4.

It localises to the cell membrane. Functionally, receptor that may play a role in the perception of bitterness and is gustducin-linked. May play a role in sensing the chemical composition of the gastrointestinal content. The activity of this receptor may stimulate alpha gustducin, mediate PLC-beta-2 activation and lead to the gating of TRPM5. This is Taste receptor type 2 member 16 (TAS2R16) from Pan troglodytes (Chimpanzee).